The chain runs to 272 residues: Hydroxyethylthiazole kinase (272 aa).

Methionine 46 lines the substrate pocket. ATP-binding residues include arginine 122 and threonine 168. Position 195 (glycine 195) interacts with substrate.

The protein belongs to the Thz kinase family. The cofactor is Mg(2+).

It carries out the reaction 5-(2-hydroxyethyl)-4-methylthiazole + ATP = 4-methyl-5-(2-phosphooxyethyl)-thiazole + ADP + H(+). The protein operates within cofactor biosynthesis; thiamine diphosphate biosynthesis; 4-methyl-5-(2-phosphoethyl)-thiazole from 5-(2-hydroxyethyl)-4-methylthiazole: step 1/1. Its function is as follows. Catalyzes the phosphorylation of the hydroxyl group of 4-methyl-5-beta-hydroxyethylthiazole (THZ). The sequence is that of Hydroxyethylthiazole kinase from Alkaliphilus metalliredigens (strain QYMF).